The chain runs to 425 residues: Multifunctional CCA protein (425 aa).

Glycine 8 and arginine 11 together coordinate ATP. Glycine 8 and arginine 11 together coordinate CTP. Residues aspartate 21 and aspartate 23 each contribute to the Mg(2+) site. 3 residues coordinate ATP: arginine 91, arginine 141, and arginine 144. Residues arginine 91, arginine 141, and arginine 144 each contribute to the CTP site. In terms of domain architecture, HD spans 230–331 (TGVHLMMVLD…VRLLERCDAI (102 aa)).

The protein belongs to the tRNA nucleotidyltransferase/poly(A) polymerase family. Bacterial CCA-adding enzyme type 1 subfamily. Monomer. Can also form homodimers and oligomers. The cofactor is Mg(2+). Ni(2+) serves as cofactor.

It catalyses the reaction a tRNA precursor + 2 CTP + ATP = a tRNA with a 3' CCA end + 3 diphosphate. The catalysed reaction is a tRNA with a 3' CCA end + 2 CTP + ATP = a tRNA with a 3' CCACCA end + 3 diphosphate. In terms of biological role, catalyzes the addition and repair of the essential 3'-terminal CCA sequence in tRNAs without using a nucleic acid template. Adds these three nucleotides in the order of C, C, and A to the tRNA nucleotide-73, using CTP and ATP as substrates and producing inorganic pyrophosphate. tRNA 3'-terminal CCA addition is required both for tRNA processing and repair. Also involved in tRNA surveillance by mediating tandem CCA addition to generate a CCACCA at the 3' terminus of unstable tRNAs. While stable tRNAs receive only 3'-terminal CCA, unstable tRNAs are marked with CCACCA and rapidly degraded. This chain is Multifunctional CCA protein, found in Acidovorax sp. (strain JS42).